The chain runs to 400 residues: Phosphoglycerate kinase (400 aa).

Substrate-binding positions include Asp-20–Asn-22, Arg-35, His-58–Arg-61, Arg-115, and Arg-155. ATP is bound by residues Glu-330 and Gly-356 to Thr-359.

It belongs to the phosphoglycerate kinase family. Monomer.

It is found in the cytoplasm. The catalysed reaction is (2R)-3-phosphoglycerate + ATP = (2R)-3-phospho-glyceroyl phosphate + ADP. It functions in the pathway carbohydrate degradation; glycolysis; pyruvate from D-glyceraldehyde 3-phosphate: step 2/5. In Haloarcula marismortui (strain ATCC 43049 / DSM 3752 / JCM 8966 / VKM B-1809) (Halobacterium marismortui), this protein is Phosphoglycerate kinase.